Reading from the N-terminus, the 278-residue chain is Nucleotide-binding protein Tbd_0529 (278 aa).

8 to 15 (GLSGSGKS) is a binding site for ATP. 57–60 (DARS) serves as a coordination point for GTP.

This sequence belongs to the RapZ-like family.

Its function is as follows. Displays ATPase and GTPase activities. In Thiobacillus denitrificans (strain ATCC 25259 / T1), this protein is Nucleotide-binding protein Tbd_0529.